Here is a 242-residue protein sequence, read N- to C-terminus: Protein HTATIP2 (242 aa).

Ala-2 is subject to N-acetylalanine. A required for interaction with elongation factor EEF1A1 region spans residues 2 to 25; the sequence is AETEALSKLREDFRMQNKSVFILG. The NADPH site is built by Ser-27, Gly-28, Glu-29, Thr-30, Arg-52, Arg-53, Leu-92, Gly-93, Tyr-143, Lys-147, Leu-170, and Arg-178. Catalysis depends on Tyr-143, which acts as the Proton acceptor. Residue Lys-147 is part of the active site.

In terms of assembly, monomer. Forms homodimers during oxidative stress. Interacts (via N-terminus) with elongation factor EEF1A1 (via middle-region); the interaction is direct and competes with EEF1A1 binding to guanyl-nucleotide exchange factor EEF1B2, thereby inhibiting GDP for GTP exchange and reactivation of EEF1A1. Interacts with nuclear transport receptors XPO4, IPO5/RANBP5, IPO7, IPO9 and KPNB1 as well as GCN1L1/GCN1 and LRPPRC probably through their HEAT repeats. Binds NCOA5/CIA.

The protein resides in the cytoplasm. Its function is as follows. Represses translation by preventing reactivation of elongation factor eEF1A. May also inhibit nuclear import by competing with nuclear import substrates for binding to a subset of nuclear transport receptors. Has additionally been proposed to act as a redox sensor involved in cellular oxidative stress surveillance. This is Protein HTATIP2 (HTATIP2) from Gorilla gorilla gorilla (Western lowland gorilla).